Reading from the N-terminus, the 734-residue chain is Photosystem I P700 chlorophyll a apoprotein A2 (734 aa).

The next 8 membrane-spanning stretches (helical) occupy residues I46–A69, L135–Q158, L175–I199, I273–Y291, L330–Y353, A369–I395, A417–H439, and F517–V535. Residues C559 and C568 each coordinate [4Fe-4S] cluster. The next 2 helical transmembrane spans lie at A575 to W596 and L643 to I665. H654, M662, and Y670 together coordinate chlorophyll a. W671 serves as a coordination point for phylloquinone. The chain crosses the membrane as a helical span at residues L707–A727.

The protein belongs to the PsaA/PsaB family. In terms of assembly, the PsaA/B heterodimer binds the P700 chlorophyll special pair and subsequent electron acceptors. PSI consists of a core antenna complex that captures photons, and an electron transfer chain that converts photonic excitation into a charge separation. The eukaryotic PSI reaction center is composed of at least 11 subunits. Requires P700 is a chlorophyll a/chlorophyll a' dimer, A0 is one or more chlorophyll a, A1 is one or both phylloquinones and FX is a shared 4Fe-4S iron-sulfur center. as cofactor.

The protein localises to the plastid. It is found in the chloroplast thylakoid membrane. The enzyme catalyses reduced [plastocyanin] + hnu + oxidized [2Fe-2S]-[ferredoxin] = oxidized [plastocyanin] + reduced [2Fe-2S]-[ferredoxin]. In terms of biological role, psaA and PsaB bind P700, the primary electron donor of photosystem I (PSI), as well as the electron acceptors A0, A1 and FX. PSI is a plastocyanin-ferredoxin oxidoreductase, converting photonic excitation into a charge separation, which transfers an electron from the donor P700 chlorophyll pair to the spectroscopically characterized acceptors A0, A1, FX, FA and FB in turn. Oxidized P700 is reduced on the lumenal side of the thylakoid membrane by plastocyanin. In Solanum bulbocastanum (Wild potato), this protein is Photosystem I P700 chlorophyll a apoprotein A2.